We begin with the raw amino-acid sequence, 116 residues long: Beta-2-microglobulin (116 aa).

Positions 1 to 19 (MKFLLSFVVLAVFSASAFA) are cleaved as a signal peptide. One can recognise an Ig-like C1-type domain in the interval 24–111 (PKIQVYSRNP…RHLKETKNIS (88 aa)). Cys44 and Cys99 are joined by a disulfide.

Belongs to the beta-2-microglobulin family. As to quaternary structure, heterodimer of an alpha chain and a beta chain. Beta-2-microglobulin is the beta-chain of major histocompatibility complex class I molecules.

Its subcellular location is the secreted. Its function is as follows. Component of the class I major histocompatibility complex (MHC). Involved in the presentation of peptide antigens to the immune system. This chain is Beta-2-microglobulin (b2m), found in Ictalurus punctatus (Channel catfish).